Consider the following 247-residue polypeptide: Cell division protein ZapD (247 aa).

It belongs to the ZapD family. In terms of assembly, interacts with FtsZ.

The protein resides in the cytoplasm. Its function is as follows. Cell division factor that enhances FtsZ-ring assembly. Directly interacts with FtsZ and promotes bundling of FtsZ protofilaments, with a reduction in FtsZ GTPase activity. This chain is Cell division protein ZapD, found in Escherichia coli O17:K52:H18 (strain UMN026 / ExPEC).